A 245-amino-acid chain; its full sequence is Fibroblast growth factor 13 (245 aa).

2 disordered regions span residues 1-37 and 213-245; these read MAAAIASSLIRQKRQAREREKSNACKCVSSPSKSKGN and TEFSRSGSGTPTKSRSVSGVLNGGKSMSQNDST. Residues 1–62 form a mediates targeting to the nucleus region; it reads MAAAIASSLI…GSKKRRRRRP (62 aa). A compositionally biased stretch (polar residues) spans 215 to 245; sequence FSRSGSGTPTKSRSVSGVLNGGKSMSQNDST.

The protein belongs to the heparin-binding growth factors family.

Its subcellular location is the cell projection. The protein resides in the filopodium. It localises to the growth cone. The protein localises to the dendrite. It is found in the cell membrane. Its subcellular location is the sarcolemma. The protein resides in the cytoplasm. Functionally, microtubule-binding protein which directly binds tubulin and is involved in both polymerization and stabilization of microtubules. Through its action on microtubules, may participate in the refinement of axons by negatively regulating axonal and leading processes branching. Plays a crucial role in neuron polarization and migration. Regulates voltage-gated sodium channel transport and function. Required for proper head development, it is involved in neural differentiation through regulation of the mek5-erk5 pathway. The chain is Fibroblast growth factor 13 (fgf13) from Xenopus laevis (African clawed frog).